The primary structure comprises 322 residues: MKLRNVSKNNLNKEDTKLSIEQFGGNVEWFNITKTLSESLPYIQQFSGETFIIKYGGAAMTDKKLAESFAHDVVLLKQLGINPIVVHGGGNKINEFLEKINKKSTFINGLRITDAETLEIVEMVLCGLVNKNITQLINNAGGNAIGLCGKDANLIEAKKICYTYKENQSNNVEKILDMGFVGEPHDINTDLLFFMEESDFIPVIAPVCSGENNLTYNVNADLVAGALANAMAAAKLIILTNVSGVTDSNGNLISELSVSHAENLIDNGTAHTGMIPKLQTCVKVVKEGYGSAHIIDGRIPHVLLLELFTIHGTGTMVVNSGV.

Residues 89 to 90 (GG), R111, and N217 each bind substrate.

It belongs to the acetylglutamate kinase family. ArgB subfamily.

It is found in the cytoplasm. It carries out the reaction N-acetyl-L-glutamate + ATP = N-acetyl-L-glutamyl 5-phosphate + ADP. Its pathway is amino-acid biosynthesis; L-arginine biosynthesis; N(2)-acetyl-L-ornithine from L-glutamate: step 2/4. Functionally, catalyzes the ATP-dependent phosphorylation of N-acetyl-L-glutamate. The polypeptide is Acetylglutamate kinase (Ehrlichia ruminantium (strain Gardel)).